A 227-amino-acid chain; its full sequence is MASHRTDRTKNPTSNGDVSKVDLLLHPELLSQEFIQLMLQERNIAVSDPEDRDRLTGLYLQHVIPLPQRELPRSRWGKRMEKSRPRLSSSSTHSSSTDSGRKRPLIVFDGSSTSTGCVKLKKPDSSSAPVTTDRLKPPVSSVSLTNPIRKLSGASTNCSSSNFSNRTPVSSSGAIPKSPSNHSNSSVHSNNATSKLKRTSPSKGEPDTAKDIKSPETKKKIQHITWP.

A compositionally biased stretch (basic and acidic residues) spans 71-84 (LPRSRWGKRMEKSR). The tract at residues 71–227 (LPRSRWGKRM…KKKIQHITWP (157 aa)) is disordered. The segment covering 88–98 (SSSSTHSSSTD) has biased composition (low complexity). The segment covering 153–173 (GASTNCSSSNFSNRTPVSSSG) has biased composition (polar residues). Low complexity predominate over residues 178 to 191 (SPSNHSNSSVHSNN). A compositionally biased stretch (basic and acidic residues) spans 204–219 (GEPDTAKDIKSPETKK).

This sequence belongs to the ashwin family.

The protein resides in the nucleus. The sequence is that of Ashwin from Danio rerio (Zebrafish).